The sequence spans 176 residues: Dual-action ribosomal maturation protein DarP (176 aa).

It belongs to the DarP family.

It localises to the cytoplasm. Its function is as follows. Member of a network of 50S ribosomal subunit biogenesis factors which assembles along the 30S-50S interface, preventing incorrect 23S rRNA structures from forming. Promotes peptidyl transferase center (PTC) maturation. The polypeptide is Dual-action ribosomal maturation protein DarP (Aliivibrio fischeri (strain MJ11) (Vibrio fischeri)).